A 209-amino-acid chain; its full sequence is Ribosomal RNA large subunit methyltransferase E (209 aa).

The S-adenosyl-L-methionine site is built by Gly63, Trp65, Asp83, Asp99, and Asp124. The active-site Proton acceptor is the Lys164.

It belongs to the class I-like SAM-binding methyltransferase superfamily. RNA methyltransferase RlmE family.

The protein localises to the cytoplasm. It catalyses the reaction uridine(2552) in 23S rRNA + S-adenosyl-L-methionine = 2'-O-methyluridine(2552) in 23S rRNA + S-adenosyl-L-homocysteine + H(+). Functionally, specifically methylates the uridine in position 2552 of 23S rRNA at the 2'-O position of the ribose in the fully assembled 50S ribosomal subunit. The sequence is that of Ribosomal RNA large subunit methyltransferase E from Photorhabdus laumondii subsp. laumondii (strain DSM 15139 / CIP 105565 / TT01) (Photorhabdus luminescens subsp. laumondii).